The following is a 449-amino-acid chain: Sensor protein QseC (449 aa).

The Cytoplasmic portion of the chain corresponds to 1-12; that stretch reads MKFTQRLSLRVR. The chain crosses the membrane as a helical span at residues 13 to 33; it reads LTLIFLILASVTWLLSSFVAW. Residues 34–156 lie on the Periplasmic side of the membrane; that stretch reads KQTTDNVDEL…QEWEYREDMA (123 aa). The helical transmembrane segment at 157-177 threads the bilayer; it reads LAIVAGQLIPWLVALPVMLII. At 178–449 the chain is on the cytoplasmic side; the sequence is MMVLLGRELA…QGGFEAKVSW (272 aa). Positions 243–449 constitute a Histidine kinase domain; sequence DAAHELRSPL…QGGFEAKVSW (207 aa). Histidine 246 carries the phosphohistidine; by autocatalysis modification.

It is found in the cell inner membrane. The enzyme catalyses ATP + protein L-histidine = ADP + protein N-phospho-L-histidine.. Member of a two-component regulatory system QseB/QseC. Activates the flagella regulon by activating transcription of FlhDC. May activate QseB by phosphorylation. The sequence is that of Sensor protein QseC (qseC) from Escherichia coli O157:H7.